A 294-amino-acid chain; its full sequence is tRNA dimethylallyltransferase (294 aa).

Glycine 10 to threonine 17 lines the ATP pocket. Threonine 12 to threonine 17 contacts substrate. Positions aspartate 35–glutamine 38 are interaction with substrate tRNA.

This sequence belongs to the IPP transferase family. In terms of assembly, monomer. Requires Mg(2+) as cofactor.

It catalyses the reaction adenosine(37) in tRNA + dimethylallyl diphosphate = N(6)-dimethylallyladenosine(37) in tRNA + diphosphate. Its function is as follows. Catalyzes the transfer of a dimethylallyl group onto the adenine at position 37 in tRNAs that read codons beginning with uridine, leading to the formation of N6-(dimethylallyl)adenosine (i(6)A). The chain is tRNA dimethylallyltransferase from Streptococcus gordonii (strain Challis / ATCC 35105 / BCRC 15272 / CH1 / DL1 / V288).